We begin with the raw amino-acid sequence, 255 residues long: NAD kinase (255 aa).

D44 serves as the catalytic Proton acceptor. NAD(+) is bound by residues 44–45 (DG), 114–115 (NE), D144, A152, and 155–160 (TAYNLS).

The protein belongs to the NAD kinase family. The cofactor is a divalent metal cation.

It localises to the cytoplasm. The enzyme catalyses NAD(+) + ATP = ADP + NADP(+) + H(+). Functionally, involved in the regulation of the intracellular balance of NAD and NADP, and is a key enzyme in the biosynthesis of NADP. Catalyzes specifically the phosphorylation on 2'-hydroxyl of the adenosine moiety of NAD to yield NADP. The polypeptide is NAD kinase (Hyphomonas neptunium (strain ATCC 15444)).